Reading from the N-terminus, the 576-residue chain is MAPGCCTTRPRPIALLAHIWRHCKPLCLLLVLLLLCETVQANPDAKRLYDDLLSNYNRLIRPVSNNTDTVLVKLGLRLSQLIDLNLKDQILTTNVWLEHEWQDHKFKWDPSEYGGVTELYVPSEHIWLPDIVLYNNADGEYVVTTMTKAILHYTGKVVWTPPAIFKSSCEIDVRYFPFDQQTCFMKFGSWTYDGDQIDLKHISQKNDKDNKVEIGIDLREYYPSVEWDILGVPAERHEKYYPCCAEPYPDIFFNITLRRKTLFYTVNLIIPCVGISYLSVLVFYLPADSGEKIALCISILLSQTMFFLLISEIIPSTSLALPLLGKYLLFTMLLVGLSVVITIIILNIHYRKPSTHKMRPWIRSFFIKRLPKLLLMRVPKDLLRDLAANKINYGLKFSKTKFGQALMDEMQMNSGGSSPDSLRRMQGRVGAGGCNGMHVTTATNRFSGLVGALGGGLSTLSGYNGLPSVLSGLDDSLSDVAARKKYPFELEKAIHNVMFIQHHMQRQDEFNAEDQDWGFVAMVMDRLFLWLFMIASLVGTFVILGEAPSLYDDTKAIDVQLSDVAKQIYNLTEKKN.

An N-terminal signal peptide occupies residues 1 to 21 (MAPGCCTTRPRPIALLAHIWR). Over 22–261 (HCKPLCLLLV…FFNITLRRKT (240 aa)) the chain is Extracellular. An N-linked (GlcNAc...) asparagine glycan is attached at asparagine 65. Cystine bridges form between cysteine 169-cysteine 183 and cysteine 243-cysteine 244. N-linked (GlcNAc...) asparagine glycosylation is present at asparagine 254. A run of 3 helical transmembrane segments spans residues 262 to 285 (LFYT…VFYL), 293 to 311 (IALC…LLIS), and 327 to 346 (YLLF…IIIL). The Cytoplasmic segment spans residues 347 to 526 (NIHYRKPSTH…WGFVAMVMDR (180 aa)). A helical transmembrane segment spans residues 527–545 (LFLWLFMIASLVGTFVILG). Asparagine 570 carries N-linked (GlcNAc...) asparagine glycosylation.

Belongs to the ligand-gated ion channel (TC 1.A.9) family. Acetylcholine receptor (TC 1.A.9.1) subfamily. In terms of tissue distribution, CNS in embryos.

Its subcellular location is the postsynaptic cell membrane. The protein localises to the cell membrane. In terms of biological role, after binding acetylcholine, the AChR responds by an extensive change in conformation that affects all subunits and leads to opening of an ion-conducting channel across the plasma membrane. In Drosophila melanogaster (Fruit fly), this protein is Acetylcholine receptor subunit alpha-like 2 (nAChRalpha2).